Consider the following 305-residue polypeptide: Probable alpha-L-glutamate ligase (305 aa).

Positions 119 to 301 (LQVLAAQHIP…IAGLIIDYLL (183 aa)) constitute an ATP-grasp domain. Residues Lys155, 192 to 193 (DF), Asp201, and 225 to 227 (RAN) contribute to the ATP site. Positions 262, 274, and 276 each coordinate Mg(2+). Residues Asp262, Glu274, and Asn276 each contribute to the Mn(2+) site.

Belongs to the RimK family. The cofactor is Mg(2+). It depends on Mn(2+) as a cofactor.

In Haemophilus ducreyi (strain 35000HP / ATCC 700724), this protein is Probable alpha-L-glutamate ligase.